Here is a 145-residue protein sequence, read N- to C-terminus: Basic phospholipase A2 P'513 (145 aa).

A signal peptide spans 1 to 21 (MYPAHLLLLLAVCVSLLGASA). A propeptide spanning residues 22 to 27 (IPPLPL) is cleaved from the precursor. Cystine bridges form between Cys38–Cys98, Cys54–Cys144, Cys56–Cys72, Cys71–Cys125, Cys78–Cys118, Cys87–Cys111, and Cys105–Cys116. 3 residues coordinate Ca(2+): Tyr55, Gly57, and Gly59. His75 is a catalytic residue. Asp76 is a binding site for Ca(2+). Asp119 is a catalytic residue.

Belongs to the phospholipase A2 family. Group I subfamily. D49 sub-subfamily. Ca(2+) serves as cofactor. In terms of tissue distribution, expressed by the venom gland.

It is found in the secreted. It carries out the reaction a 1,2-diacyl-sn-glycero-3-phosphocholine + H2O = a 1-acyl-sn-glycero-3-phosphocholine + a fatty acid + H(+). In terms of biological role, PLA2 catalyzes the calcium-dependent hydrolysis of the 2-acyl groups in 3-sn-phosphoglycerides. This is Basic phospholipase A2 P'513 from Laticauda laticaudata (Blue-ringed sea krait).